Reading from the N-terminus, the 294-residue chain is Probable 2-(5''-triphosphoribosyl)-3'-dephosphocoenzyme-A synthase (294 aa).

Belongs to the CitG/MdcB family.

It catalyses the reaction 3'-dephospho-CoA + ATP = 2'-(5''-triphospho-alpha-D-ribosyl)-3'-dephospho-CoA + adenine. This chain is Probable 2-(5''-triphosphoribosyl)-3'-dephosphocoenzyme-A synthase, found in Streptococcus pyogenes serotype M18 (strain MGAS8232).